A 354-amino-acid chain; its full sequence is UDP-N-acetylglucosamine--N-acetylmuramyl-(pentapeptide) pyrophosphoryl-undecaprenol N-acetylglucosamine transferase (354 aa).

UDP-N-acetyl-alpha-D-glucosamine contacts are provided by residues 13 to 15, asparagine 125, serine 189, isoleucine 242, 261 to 266, and glutamine 286; these read SGG and ALTVSE.

It belongs to the glycosyltransferase 28 family. MurG subfamily.

The protein localises to the cell inner membrane. The catalysed reaction is di-trans,octa-cis-undecaprenyl diphospho-N-acetyl-alpha-D-muramoyl-L-alanyl-D-glutamyl-meso-2,6-diaminopimeloyl-D-alanyl-D-alanine + UDP-N-acetyl-alpha-D-glucosamine = di-trans,octa-cis-undecaprenyl diphospho-[N-acetyl-alpha-D-glucosaminyl-(1-&gt;4)]-N-acetyl-alpha-D-muramoyl-L-alanyl-D-glutamyl-meso-2,6-diaminopimeloyl-D-alanyl-D-alanine + UDP + H(+). It participates in cell wall biogenesis; peptidoglycan biosynthesis. Its function is as follows. Cell wall formation. Catalyzes the transfer of a GlcNAc subunit on undecaprenyl-pyrophosphoryl-MurNAc-pentapeptide (lipid intermediate I) to form undecaprenyl-pyrophosphoryl-MurNAc-(pentapeptide)GlcNAc (lipid intermediate II). The sequence is that of UDP-N-acetylglucosamine--N-acetylmuramyl-(pentapeptide) pyrophosphoryl-undecaprenol N-acetylglucosamine transferase from Buchnera aphidicola subsp. Acyrthosiphon pisum (strain 5A).